The sequence spans 108 residues: MAIRQATTPQHDAGTVLERKEQALKPPAMYKVLLLNDDYTPMEFVVMILQQYFSKDRETATQIMLTVHREGKGVCGLYTRDIAATKVELVSTHARQAGHPLQCVMEEA.

The protein belongs to the ClpS family. Binds to the N-terminal domain of the chaperone ClpA.

Its function is as follows. Involved in the modulation of the specificity of the ClpAP-mediated ATP-dependent protein degradation. The chain is ATP-dependent Clp protease adapter protein ClpS from Ralstonia pickettii (strain 12J).